Here is a 770-residue protein sequence, read N- to C-terminus: Transducin-like enhancer protein 1 (770 aa).

Positions 1-131 (MFPQSRHPTP…IIGQQQLQAQ (131 aa)) are q domain. Disordered stretches follow at residues 128 to 157 (LQAQHLSHGHGPPVPLTPHPSGLQPPGIPP) and 176 to 348 (HLAI…PAID). The segment at 132–199 (HLSHGHGPPV…HHRDREPGTS (68 aa)) is GP domain. 2 stretches are compositionally biased toward basic and acidic residues: residues 178 to 196 (AIKDDKKHHDAEHHRDREP) and 209 to 246 (RGTDKRRNGPEFSNDIKKRKVDDKDSSHYDSDGDKSDD). Residues 200 to 268 (NSLLVPDSLR…SPRASPAHSP (69 aa)) form a ccN domain region. The Nuclear localization signal signature appears at 225–228 (KKRK). S239 is subject to Phosphoserine. The segment covering 257–266 (PSSPRASPAH) has biased composition (low complexity). 3 positions are modified to phosphoserine; by CDK1: S259, S263, and S267. Basic and acidic residues predominate over residues 267-283 (SPRENGIDKNRLLKKDA). The interval 269–450 (RENGIDKNRL…GGKPAYSFHV (182 aa)) is SP domain. Low complexity predominate over residues 284–298 (SSSPASTASSASSTS). Residue S286 is modified to Phosphoserine. Residues 300–310 (KSKEMSLHEKA) are compositionally biased toward basic and acidic residues. WD repeat units lie at residues 470–501 (GIPRHARQINTLNHGEVVCAVTISNPTRHVYT), 528–558 (NRDNYIRSCKLLPDGCTLIVGGEASTLSIWD), 572–602 (SSAPACYALAISPDSKVCFSCCSDGNIAVWD), 614–644 (GHTDGASCIDISNDGTKLWTGGLDNTVRSWD), 696–726 (LHESCVLSLKFAYCGKWFVSTGKDNLLNAWR), and 737–767 (KESSSVLSCDISVDDKYIVTGSGDKKATVYE).

This sequence belongs to the WD repeat Groucho/TLE family. In terms of assembly, homooligomer and heterooligomer with other family members. Binds RUNX1, RUNX3, FOXA2, KDM6A, UTY, histone H3, HESX1, ESRRG and the NF-kappa-B subunit RELA. Interacts with HES1 (via WRPW motif). Binds TCF7, LEF1, TCF7L1 and TCF7L2. Interacts with SIX3. Interacts with EFNB1. Interacts with TLE4. Interacts with FOXG1/BF-1; the interaction is inhibited by TLE6/GRG6. Phosphorylated, probably by CDK1. The degree of phosphorylation varies throughout the cell cycle, and is highest at the G2/M transition. Becomes hyperphosphorylated in response to cell differentiation and interaction with HES1 or RUNX1. In terms of processing, ubiquitinated by XIAP/BIRC4. In terms of tissue distribution, in all tissues examined, mostly in brain, liver and muscle.

The protein resides in the nucleus. Functionally, transcriptional corepressor that binds to a number of transcription factors. Inhibits NF-kappa-B-regulated gene expression. Inhibits the transcriptional activation mediated by FOXA2, and by CTNNB1 and TCF family members in Wnt signaling. Enhances FOXG1/BF-1- and HES1-mediated transcriptional repression. The effects of full-length TLE family members may be modulated by association with dominant-negative AES. Unusual function as coactivator for ESRRG. This chain is Transducin-like enhancer protein 1 (TLE1), found in Homo sapiens (Human).